The chain runs to 372 residues: N-methyl-L-tryptophan oxidase (372 aa).

D4 to H34 is an FAD binding site. Position 308 is an S-8alpha-FAD cysteine (C308).

It belongs to the MSOX/MTOX family. MTOX subfamily. Monomer. The cofactor is FAD.

The enzyme catalyses N(alpha)-methyl-L-tryptophan + O2 + H2O = L-tryptophan + formaldehyde + H2O2. Its function is as follows. Catalyzes the oxidative demethylation of N-methyl-L-tryptophan. This Shigella flexneri serotype 5b (strain 8401) protein is N-methyl-L-tryptophan oxidase.